Consider the following 118-residue polypeptide: Cycloviolacin-O11 (118 aa).

Positions 1–22 are cleaved as a signal peptide; sequence MEMKNMVVGLFLIAAFALPALA. The propeptide occupies 23–84; sequence TSFEKDFITH…THSNSINALG (62 aa). Residues 85–115 constitute a cross-link (cyclopeptide (Gly-Asn)); the sequence is GTLPCGESCVWIPCISAVVGCSCKSKVCYKN. 3 disulfides stabilise this stretch: C89/C105, C93/C107, and C98/C112. Positions 116-118 are excised as a propeptide; the sequence is SLA.

Post-translationally, cycloviolacin-O11 is a cyclic peptide. As to expression, expressed in leaves, petals and petioles but not in roots and runners (at protein level).

Probably participates in a plant defense mechanism. The polypeptide is Cycloviolacin-O11 (Voc2) (Viola odorata (Sweet violet)).